We begin with the raw amino-acid sequence, 176 residues long: Peptide methionine sulfoxide reductase MsrA (176 aa).

C12 is a catalytic residue.

Belongs to the MsrA Met sulfoxide reductase family.

The enzyme catalyses L-methionyl-[protein] + [thioredoxin]-disulfide + H2O = L-methionyl-(S)-S-oxide-[protein] + [thioredoxin]-dithiol. It catalyses the reaction [thioredoxin]-disulfide + L-methionine + H2O = L-methionine (S)-S-oxide + [thioredoxin]-dithiol. Its function is as follows. Has an important function as a repair enzyme for proteins that have been inactivated by oxidation. Catalyzes the reversible oxidation-reduction of methionine sulfoxide in proteins to methionine. This is Peptide methionine sulfoxide reductase MsrA from Thermus thermophilus (strain ATCC 27634 / DSM 579 / HB8).